The following is a 31-amino-acid chain: Cytochrome b6-f complex subunit 6 (31 aa).

The helical transmembrane segment at 4 to 24 threads the bilayer; the sequence is ITSYFGFLLAALTITSALFIG.

This sequence belongs to the PetL family. As to quaternary structure, the 4 large subunits of the cytochrome b6-f complex are cytochrome b6, subunit IV (17 kDa polypeptide, PetD), cytochrome f and the Rieske protein, while the 4 small subunits are PetG, PetL, PetM and PetN. The complex functions as a dimer.

It is found in the plastid. Its subcellular location is the chloroplast thylakoid membrane. Its function is as follows. Component of the cytochrome b6-f complex, which mediates electron transfer between photosystem II (PSII) and photosystem I (PSI), cyclic electron flow around PSI, and state transitions. PetL is important for photoautotrophic growth as well as for electron transfer efficiency and stability of the cytochrome b6-f complex. This chain is Cytochrome b6-f complex subunit 6, found in Citrus sinensis (Sweet orange).